A 141-amino-acid chain; its full sequence is Small ribosomal subunit protein uS8 (141 aa).

It belongs to the universal ribosomal protein uS8 family. Part of the 30S ribosomal subunit. Contacts proteins S5 and S12.

Its function is as follows. One of the primary rRNA binding proteins, it binds directly to 16S rRNA central domain where it helps coordinate assembly of the platform of the 30S subunit. This is Small ribosomal subunit protein uS8 from Mycoplasma genitalium (strain ATCC 33530 / DSM 19775 / NCTC 10195 / G37) (Mycoplasmoides genitalium).